A 373-amino-acid chain; its full sequence is Chaperone protein DnaJ (373 aa).

The region spanning 4–69 (NYYEILEISQ…EKRSIYDRYG (66 aa)) is the J domain. Residues 133–210 (GCKKKIDFSY…CHGNGYEEIK (78 aa)) form a CR-type zinc finger. Zn(2+) contacts are provided by C146, C149, C162, C165, C184, C187, C198, and C201. CXXCXGXG motif repeat units lie at residues 146-153 (CKSCKGSG), 162-169 (CPHCGGKG), 184-191 (CDHCKGSG), and 198-205 (CKTCHGNG).

The protein belongs to the DnaJ family. As to quaternary structure, homodimer. Zn(2+) is required as a cofactor.

The protein localises to the cytoplasm. Functionally, participates actively in the response to hyperosmotic and heat shock by preventing the aggregation of stress-denatured proteins and by disaggregating proteins, also in an autonomous, DnaK-independent fashion. Unfolded proteins bind initially to DnaJ; upon interaction with the DnaJ-bound protein, DnaK hydrolyzes its bound ATP, resulting in the formation of a stable complex. GrpE releases ADP from DnaK; ATP binding to DnaK triggers the release of the substrate protein, thus completing the reaction cycle. Several rounds of ATP-dependent interactions between DnaJ, DnaK and GrpE are required for fully efficient folding. Also involved, together with DnaK and GrpE, in the DNA replication of plasmids through activation of initiation proteins. The polypeptide is Chaperone protein DnaJ (Campylobacter lari (strain RM2100 / D67 / ATCC BAA-1060)).